The chain runs to 337 residues: Anthranilate phosphoribosyltransferase (337 aa).

5-phospho-alpha-D-ribose 1-diphosphate-binding positions include Gly-81, 84-85 (GD), Ser-89, 91-94 (NVST), 109-117 (KHGNRALSS), and Ala-121. Gly-81 serves as a coordination point for anthranilate. Ser-93 contacts Mg(2+). Asn-112 is a binding site for anthranilate. Arg-167 is an anthranilate binding site. Mg(2+)-binding residues include Asp-226 and Glu-227.

The protein belongs to the anthranilate phosphoribosyltransferase family. Homodimer. Requires Mg(2+) as cofactor.

The catalysed reaction is N-(5-phospho-beta-D-ribosyl)anthranilate + diphosphate = 5-phospho-alpha-D-ribose 1-diphosphate + anthranilate. It participates in amino-acid biosynthesis; L-tryptophan biosynthesis; L-tryptophan from chorismate: step 2/5. In terms of biological role, catalyzes the transfer of the phosphoribosyl group of 5-phosphorylribose-1-pyrophosphate (PRPP) to anthranilate to yield N-(5'-phosphoribosyl)-anthranilate (PRA). The protein is Anthranilate phosphoribosyltransferase of Bradyrhizobium diazoefficiens (strain JCM 10833 / BCRC 13528 / IAM 13628 / NBRC 14792 / USDA 110).